Reading from the N-terminus, the 346-residue chain is Holliday junction branch migration complex subunit RuvB (346 aa).

The segment at 4–185 (SDRIITASPF…FGIVSRLEFY (182 aa)) is large ATPase domain (RuvB-L). Residues Leu24, Arg25, Gly66, Lys69, Thr70, Thr71, 132-134 (EDY), Arg175, Tyr185, and Arg222 contribute to the ATP site. Thr70 is a Mg(2+) binding site. The interval 186–256 (TADELGKIVT…VADAALQMLD (71 aa)) is small ATPAse domain (RuvB-S). Positions 259-346 (ATGLDVLDRK…TTVPSLFDPD (88 aa)) are head domain (RuvB-H). DNA contacts are provided by Arg295, Arg314, and Arg319.

This sequence belongs to the RuvB family. As to quaternary structure, homohexamer. Forms an RuvA(8)-RuvB(12)-Holliday junction (HJ) complex. HJ DNA is sandwiched between 2 RuvA tetramers; dsDNA enters through RuvA and exits via RuvB. An RuvB hexamer assembles on each DNA strand where it exits the tetramer. Each RuvB hexamer is contacted by two RuvA subunits (via domain III) on 2 adjacent RuvB subunits; this complex drives branch migration. In the full resolvosome a probable DNA-RuvA(4)-RuvB(12)-RuvC(2) complex forms which resolves the HJ.

It is found in the cytoplasm. The enzyme catalyses ATP + H2O = ADP + phosphate + H(+). Functionally, the RuvA-RuvB-RuvC complex processes Holliday junction (HJ) DNA during genetic recombination and DNA repair, while the RuvA-RuvB complex plays an important role in the rescue of blocked DNA replication forks via replication fork reversal (RFR). RuvA specifically binds to HJ cruciform DNA, conferring on it an open structure. The RuvB hexamer acts as an ATP-dependent pump, pulling dsDNA into and through the RuvAB complex. RuvB forms 2 homohexamers on either side of HJ DNA bound by 1 or 2 RuvA tetramers; 4 subunits per hexamer contact DNA at a time. Coordinated motions by a converter formed by DNA-disengaged RuvB subunits stimulates ATP hydrolysis and nucleotide exchange. Immobilization of the converter enables RuvB to convert the ATP-contained energy into a lever motion, pulling 2 nucleotides of DNA out of the RuvA tetramer per ATP hydrolyzed, thus driving DNA branch migration. The RuvB motors rotate together with the DNA substrate, which together with the progressing nucleotide cycle form the mechanistic basis for DNA recombination by continuous HJ branch migration. Branch migration allows RuvC to scan DNA until it finds its consensus sequence, where it cleaves and resolves cruciform DNA. The sequence is that of Holliday junction branch migration complex subunit RuvB from Nitrosomonas europaea (strain ATCC 19718 / CIP 103999 / KCTC 2705 / NBRC 14298).